A 239-amino-acid chain; its full sequence is Aspartate/glutamate leucyltransferase (239 aa).

Belongs to the R-transferase family. Bpt subfamily.

It is found in the cytoplasm. The enzyme catalyses N-terminal L-glutamyl-[protein] + L-leucyl-tRNA(Leu) = N-terminal L-leucyl-L-glutamyl-[protein] + tRNA(Leu) + H(+). It carries out the reaction N-terminal L-aspartyl-[protein] + L-leucyl-tRNA(Leu) = N-terminal L-leucyl-L-aspartyl-[protein] + tRNA(Leu) + H(+). Its function is as follows. Functions in the N-end rule pathway of protein degradation where it conjugates Leu from its aminoacyl-tRNA to the N-termini of proteins containing an N-terminal aspartate or glutamate. The polypeptide is Aspartate/glutamate leucyltransferase (Campylobacter jejuni subsp. jejuni serotype O:6 (strain 81116 / NCTC 11828)).